Here is a 663-residue protein sequence, read N- to C-terminus: MGAVSRDDYIALCTELVEHDRCYYVLNQPTISDYSYDVKMRELQEIEVQHPEWKVSWSPTMYLGDRPSGQFPVVPHSSPMLSIANVYSLQELEEFFSRTEKLLGYSPGYSLELKIDGIAVAIRYEKRLFAQALSRGNGVKGEDITANVSTIRSLPMRLPQEAPEDLEVRGEVFLSYEAFEELNACQREQGKLEFANPRNAAGGTLKLLSSKEAAKRKLDLSVYGLITDQKKRSHFENLQLCSQWGFFVAGMPKQCRSRQEVVERIREIEEMRAALPMAIDGVVIKVDNIAHQDRLGLTSKHYRWAIAYKYAPERAETILEDIVVQVGKTGILTPVAELAPVFLSGSRVSRASLYNQDEIEKKDIRIGDSVYVEKGGEVIPKIVGINLAKRSLESEPWKMPSLCPVCHEPVVKEKVSVRCINPLCSGGMLEKICFFASKSALNIDHLGEKVVTKLFEVGLISSCSDIFALTEEDLKQVPGFKDRSIQNLLASIAGAKKVALDRLLTALSIPFVGSSGAIALADHFVTLDKVIEASLDELMSIEGIGPKVAASIVAFFSKHENREEIRRMQELGVQVLSKQSDKEAPLQGKVFVLTGTLQQMTRTQAEERIRSLGGKVSSSVSKSTYAVIAGSEAGGKLKKAQDLGLSIWNESELLRILDAKSVS.

NAD(+) contacts are provided by residues D33–D37, S82–I83, and E112. K114 serves as the catalytic N6-AMP-lysine intermediate. NAD(+) is bound by residues R135, E171, K285, and K309. Positions 403, 406, 419, and 424 each coordinate Zn(2+). Residues D581 to S663 form the BRCT domain.

This sequence belongs to the NAD-dependent DNA ligase family. LigA subfamily. It depends on Mg(2+) as a cofactor. Mn(2+) is required as a cofactor.

It catalyses the reaction NAD(+) + (deoxyribonucleotide)n-3'-hydroxyl + 5'-phospho-(deoxyribonucleotide)m = (deoxyribonucleotide)n+m + AMP + beta-nicotinamide D-nucleotide.. Functionally, DNA ligase that catalyzes the formation of phosphodiester linkages between 5'-phosphoryl and 3'-hydroxyl groups in double-stranded DNA using NAD as a coenzyme and as the energy source for the reaction. It is essential for DNA replication and repair of damaged DNA. The chain is DNA ligase from Chlamydia trachomatis serovar A (strain ATCC VR-571B / DSM 19440 / HAR-13).